Reading from the N-terminus, the 421-residue chain is 3-isopropylmalate dehydratase large subunit (421 aa).

Residues C300, C360, and C363 each contribute to the [4Fe-4S] cluster site.

This sequence belongs to the aconitase/IPM isomerase family. LeuC type 2 subfamily. Heterodimer of LeuC and LeuD. [4Fe-4S] cluster serves as cofactor.

The catalysed reaction is (2R,3S)-3-isopropylmalate = (2S)-2-isopropylmalate. The protein operates within amino-acid biosynthesis; L-leucine biosynthesis; L-leucine from 3-methyl-2-oxobutanoate: step 2/4. Catalyzes the isomerization between 2-isopropylmalate and 3-isopropylmalate, via the formation of 2-isopropylmaleate. In Moorella thermoacetica (strain ATCC 39073 / JCM 9320), this protein is 3-isopropylmalate dehydratase large subunit.